Reading from the N-terminus, the 435-residue chain is Astacin-like metalloendopeptidase (435 aa).

Positions M1 to G23 are cleaved as a signal peptide. The Peptidase M12A domain maps to R85 to S282. 2 disulfides stabilise this stretch: C132–C281 and C153–C172. Residue H182 coordinates Zn(2+). The active site involves E183. Residues H186 and H192 each coordinate Zn(2+). The span at S318–S329 shows a compositional bias: low complexity. Residues S318–V356 form a disordered region. A compositionally biased stretch (polar residues) spans G340–S355.

In terms of assembly, interacts (via N-terminal domain) with SPACA3; the interaction occurs during fertilization. The cofactor is Zn(2+). As to expression, ovary-specific. Expressed in secondary, antral and Graafian follicle oocytes. Expressed in the egg cells. Not detected in two-cell embryos. Not detected in naked oocytes, oocytes in primordial or unilaminar primary follicles, or in any other ovarian cells at pre-pubertal, pubertal or adult stages (at protein level). Ovary-specific.

It is found in the cytoplasm. It localises to the cell membrane. The protein localises to the cytoplasmic vesicle. The protein resides in the secretory vesicle. Its subcellular location is the cortical granule. With respect to regulation, inhibited by wide spectrum metalloproteinase inhibitor batimastat (BB-94). Also inhibited by EDTA. In terms of biological role, oocyte-specific oolemmal receptor involved in sperm and egg adhesion and fertilization. Plays a role in the polyspermy inhibition. Probably acts as a protease for the post-fertilization cleavage of ZP2. Cleaves the sperm-binding ZP2 at the surface of the zona pellucida after fertilization and cortical granule exocytosis, rendering the zona pellucida unable to support further sperm binding. The sequence is that of Astacin-like metalloendopeptidase from Mus musculus (Mouse).